The sequence spans 565 residues: Thiol:disulfide interchange protein DsbD (565 aa).

The signal sequence occupies residues 1–19 (MAQRIFTLILLLCSTSVFA). At 20–162 (GLFDAPGRSQ…VPQQEQPTAQ (143 aa)) the chain is on the periplasmic side. 2 cysteine pairs are disulfide-bonded: Cys122–Cys128 and Cys182–Cys304. A helical transmembrane segment spans residues 163–183 (LPFSALWALLIGIGIAFTPCV). Residues 184-207 (LPMYPLISGIVLGGKQRLSTARAL) lie on the Cytoplasmic side of the membrane. Residues 208-228 (LLTFIYVQGMALTYTALGLVV) form a helical membrane-spanning segment. Residues 229–242 (AAAGLQFQAALQHP) lie on the Periplasmic side of the membrane. Residues 243–263 (YVLIGLTIVFTLLAMSMFGLL) traverse the membrane as a helical segment. Topologically, residues 264 to 295 (TLQLPSSLQTRLTLMSNRQQGGSPGGVFIMGT) are cytoplasmic. Residues 296–316 (IAGLICSPCTTAPLSAILLYI) traverse the membrane as a helical segment. Over 317-322 (AQSGNM) the chain is Periplasmic. Residues 323–343 (WLGGGTLYLYALGMGLPLMLI) traverse the membrane as a helical segment. The Cytoplasmic segment spans residues 344-356 (TVFGNRLLPKSGP). A helical membrane pass occupies residues 357-377 (WMEQVKTAFGFVILALPVFLL). The Periplasmic portion of the chain corresponds to 378-383 (ERVIGD). Residues 384-404 (VWGLRLWSALGVAFFGWAFIT) traverse the membrane as a helical segment. Over 405–417 (SLQAKRGWMRVVQ) the chain is Cytoplasmic. A helical transmembrane segment spans residues 418-438 (IILLAAALVSVRPLQDWAFGA). The Thioredoxin domain maps to 434–565 (WAFGATHTAQ…FSAHLRDRQP (132 aa)). Over 439–565 (THTAQTQTHL…FSAHLRDRQP (127 aa)) the chain is Periplasmic. Cys480 and Cys483 form a disulfide bridge.

This sequence belongs to the thioredoxin family. DsbD subfamily.

The protein resides in the cell inner membrane. It catalyses the reaction [protein]-dithiol + NAD(+) = [protein]-disulfide + NADH + H(+). The enzyme catalyses [protein]-dithiol + NADP(+) = [protein]-disulfide + NADPH + H(+). In terms of biological role, required to facilitate the formation of correct disulfide bonds in some periplasmic proteins and for the assembly of the periplasmic c-type cytochromes. Acts by transferring electrons from cytoplasmic thioredoxin to the periplasm. This transfer involves a cascade of disulfide bond formation and reduction steps. This chain is Thiol:disulfide interchange protein DsbD, found in Escherichia coli O157:H7.